A 549-amino-acid chain; its full sequence is Urocanate hydratase (549 aa).

NAD(+) contacts are provided by residues 46–47 (GG), glutamine 124, glutamate 190, arginine 195, 236–237 (NA), 257–261 (QTSAH), 267–268 (YV), and tyrosine 316. Residue cysteine 404 is part of the active site. An NAD(+)-binding site is contributed by glycine 486.

The protein belongs to the urocanase family. Requires NAD(+) as cofactor.

The protein resides in the cytoplasm. It catalyses the reaction 4-imidazolone-5-propanoate = trans-urocanate + H2O. Its pathway is amino-acid degradation; L-histidine degradation into L-glutamate; N-formimidoyl-L-glutamate from L-histidine: step 2/3. In terms of biological role, catalyzes the conversion of urocanate to 4-imidazolone-5-propionate. This chain is Urocanate hydratase, found in Thermoanaerobacter pseudethanolicus (strain ATCC 33223 / 39E) (Clostridium thermohydrosulfuricum).